The following is a 279-amino-acid chain: Phosphatidylglycerol--prolipoprotein diacylglyceryl transferase (279 aa).

3 helical membrane-spanning segments follow: residues 18–38, 55–75, and 89–109; these read LSVR…YFVA, IIFY…VIFQ, and IWHG…AGVI. Arg-137 contributes to the a 1,2-diacyl-sn-glycero-3-phospho-(1'-sn-glycerol) binding site. 2 consecutive transmembrane segments (helical) span residues 203-223 and 235-255; these read LGET…FIEG and IRVA…LIVY.

Belongs to the Lgt family.

It localises to the cell membrane. The catalysed reaction is L-cysteinyl-[prolipoprotein] + a 1,2-diacyl-sn-glycero-3-phospho-(1'-sn-glycerol) = an S-1,2-diacyl-sn-glyceryl-L-cysteinyl-[prolipoprotein] + sn-glycerol 1-phosphate + H(+). The protein operates within protein modification; lipoprotein biosynthesis (diacylglyceryl transfer). In terms of biological role, catalyzes the transfer of the diacylglyceryl group from phosphatidylglycerol to the sulfhydryl group of the N-terminal cysteine of a prolipoprotein, the first step in the formation of mature lipoproteins. This Staphylococcus aureus (strain MSSA476) protein is Phosphatidylglycerol--prolipoprotein diacylglyceryl transferase.